Consider the following 396-residue polypeptide: Elongation factor Tu (396 aa).

The region spanning 10-206 (KPHVNVGTIG…ALDSYIPDPE (197 aa)) is the tr-type G domain. Positions 19 to 26 (GHVDHGKT) are G1. 19–26 (GHVDHGKT) serves as a coordination point for GTP. A Mg(2+)-binding site is contributed by threonine 26. Residues 60 to 64 (GITIN) are G2. The tract at residues 81–84 (DCPG) is G3. Residues 81 to 85 (DCPGH) and 136 to 139 (NKCD) each bind GTP. The interval 136–139 (NKCD) is G4. Residues 174–176 (SAL) form a G5 region.

It belongs to the TRAFAC class translation factor GTPase superfamily. Classic translation factor GTPase family. EF-Tu/EF-1A subfamily. As to quaternary structure, monomer.

It localises to the cytoplasm. It catalyses the reaction GTP + H2O = GDP + phosphate + H(+). Its function is as follows. GTP hydrolase that promotes the GTP-dependent binding of aminoacyl-tRNA to the A-site of ribosomes during protein biosynthesis. This chain is Elongation factor Tu, found in Dechloromonas aromatica (strain RCB).